Reading from the N-terminus, the 393-residue chain is NAD(P)H-quinone oxidoreductase subunit H, chloroplastic (393 aa).

The protein belongs to the complex I 49 kDa subunit family. In terms of assembly, NDH is composed of at least 16 different subunits, 5 of which are encoded in the nucleus.

Its subcellular location is the plastid. The protein localises to the chloroplast thylakoid membrane. It catalyses the reaction a plastoquinone + NADH + (n+1) H(+)(in) = a plastoquinol + NAD(+) + n H(+)(out). The enzyme catalyses a plastoquinone + NADPH + (n+1) H(+)(in) = a plastoquinol + NADP(+) + n H(+)(out). Functionally, NDH shuttles electrons from NAD(P)H:plastoquinone, via FMN and iron-sulfur (Fe-S) centers, to quinones in the photosynthetic chain and possibly in a chloroplast respiratory chain. The immediate electron acceptor for the enzyme in this species is believed to be plastoquinone. Couples the redox reaction to proton translocation, and thus conserves the redox energy in a proton gradient. The chain is NAD(P)H-quinone oxidoreductase subunit H, chloroplastic from Nandina domestica (Heavenly bamboo).